The sequence spans 443 residues: uncharacterized protein (443 aa).

The tract at residues Met-1 to Met-21 is disordered. The segment covering Gln-10–Asp-20 has biased composition (polar residues).

This is an uncharacterized protein from Caenorhabditis elegans.